Consider the following 142-residue polypeptide: Large ribosomal subunit protein uL13 (142 aa).

The protein belongs to the universal ribosomal protein uL13 family. Part of the 50S ribosomal subunit.

Its function is as follows. This protein is one of the early assembly proteins of the 50S ribosomal subunit, although it is not seen to bind rRNA by itself. It is important during the early stages of 50S assembly. In Pseudomonas putida (strain ATCC 700007 / DSM 6899 / JCM 31910 / BCRC 17059 / LMG 24140 / F1), this protein is Large ribosomal subunit protein uL13.